The sequence spans 201 residues: 3-isopropylmalate dehydratase small subunit (201 aa).

Belongs to the LeuD family. LeuD type 1 subfamily. As to quaternary structure, heterodimer of LeuC and LeuD.

It catalyses the reaction (2R,3S)-3-isopropylmalate = (2S)-2-isopropylmalate. It functions in the pathway amino-acid biosynthesis; L-leucine biosynthesis; L-leucine from 3-methyl-2-oxobutanoate: step 2/4. Its function is as follows. Catalyzes the isomerization between 2-isopropylmalate and 3-isopropylmalate, via the formation of 2-isopropylmaleate. The polypeptide is 3-isopropylmalate dehydratase small subunit (Pasteurella multocida (strain Pm70)).